Consider the following 92-residue polypeptide: Small ribosomal subunit protein uS19 (92 aa).

Belongs to the universal ribosomal protein uS19 family.

In terms of biological role, protein S19 forms a complex with S13 that binds strongly to the 16S ribosomal RNA. The polypeptide is Small ribosomal subunit protein uS19 (Rhodopseudomonas palustris (strain BisB5)).